A 410-amino-acid chain; its full sequence is Multifunctional CCA protein (410 aa).

The ATP site is built by glycine 8 and arginine 11. Positions 8 and 11 each coordinate CTP. Aspartate 21 and aspartate 23 together coordinate Mg(2+). The ATP site is built by arginine 91, arginine 137, and arginine 140. CTP is bound by residues arginine 91, arginine 137, and arginine 140. The region spanning 228–329 (TGVHVLSVLQ…LELLQSFDVY (102 aa)) is the HD domain.

Belongs to the tRNA nucleotidyltransferase/poly(A) polymerase family. Bacterial CCA-adding enzyme type 1 subfamily. As to quaternary structure, monomer. Can also form homodimers and oligomers. Requires Mg(2+) as cofactor. The cofactor is Ni(2+).

It carries out the reaction a tRNA precursor + 2 CTP + ATP = a tRNA with a 3' CCA end + 3 diphosphate. The catalysed reaction is a tRNA with a 3' CCA end + 2 CTP + ATP = a tRNA with a 3' CCACCA end + 3 diphosphate. Its function is as follows. Catalyzes the addition and repair of the essential 3'-terminal CCA sequence in tRNAs without using a nucleic acid template. Adds these three nucleotides in the order of C, C, and A to the tRNA nucleotide-73, using CTP and ATP as substrates and producing inorganic pyrophosphate. tRNA 3'-terminal CCA addition is required both for tRNA processing and repair. Also involved in tRNA surveillance by mediating tandem CCA addition to generate a CCACCA at the 3' terminus of unstable tRNAs. While stable tRNAs receive only 3'-terminal CCA, unstable tRNAs are marked with CCACCA and rapidly degraded. The chain is Multifunctional CCA protein from Pseudomonas aeruginosa (strain ATCC 15692 / DSM 22644 / CIP 104116 / JCM 14847 / LMG 12228 / 1C / PRS 101 / PAO1).